Consider the following 152-residue polypeptide: Regulatory protein RecX (152 aa).

This sequence belongs to the RecX family.

The protein resides in the cytoplasm. Modulates RecA activity. This Haemophilus influenzae (strain 86-028NP) protein is Regulatory protein RecX.